The chain runs to 618 residues: Methionine--tRNA ligase (618 aa).

The 'HIGH' region signature appears at 12–22 (YYVNAEPHLGH). Zn(2+) contacts are provided by Cys127, Cys130, Cys144, and His147. Residues 297 to 301 (KMSKT) carry the 'KMSKS' region motif. Lys300 is an ATP binding site. In terms of domain architecture, tRNA-binding spans 518 to 618 (DFAKVELRVA…GEVPPGAVVK (101 aa)).

The protein belongs to the class-I aminoacyl-tRNA synthetase family. MetG type 2A subfamily. Homodimer. It depends on Zn(2+) as a cofactor.

The protein resides in the cytoplasm. The catalysed reaction is tRNA(Met) + L-methionine + ATP = L-methionyl-tRNA(Met) + AMP + diphosphate. Is required not only for elongation of protein synthesis but also for the initiation of all mRNA translation through initiator tRNA(fMet) aminoacylation. This Thermus thermophilus (strain ATCC 27634 / DSM 579 / HB8) protein is Methionine--tRNA ligase (metG).